Reading from the N-terminus, the 558-residue chain is Nucleoprotein (558 aa).

A binding site for the cap structure m7GTP region spans residues 54–237 (MRKERRDDKD…ITEQQSSINI (184 aa)). The Mn(2+) site is built by Asp-382 and Glu-384. Residues Glu-392, Cys-499, His-502, and Cys-518 each contribute to the Zn(2+) site. Residue Asp-522 coordinates Mn(2+).

Belongs to the arenaviridae nucleocapsid protein family. As to quaternary structure, homomultimerizes to form the nucleocapsid. Binds to viral genomic RNA. Interacts with glycoprotein G2. Interacts with protein Z; this interaction probably directs the encapsidated genome to budding sites. Interacts with protein L; this interaction does not interfere with Z-L interaction. Interacts with host IKBKE (via Protein kinase domain); the interaction inhibits IKBKE kinase activity.

Its subcellular location is the virion. It is found in the host cytoplasm. Its function is as follows. Encapsidates the genome, protecting it from nucleases. The encapsidated genomic RNA is termed the nucleocapsid (NC). Serves as template for viral transcription and replication. The increased presence of protein N in host cell does not seem to trigger the switch from transcription to replication as observed in other negative strain RNA viruses. Through the interaction with host IKBKE, strongly inhibits the phosphorylation and nuclear translocation of host IRF3, a protein involved in interferon activation pathway, leading to the inhibition of interferon-beta and IRF3-dependent promoters activation. Also encodes a functional 3'-5' exoribonuclease that degrades preferentially dsRNA substrates and thereby participates in the suppression of interferon induction. The chain is Nucleoprotein from Lymphocytic choriomeningitis virus (strain WE) (LCMV).